Consider the following 265-residue polypeptide: Undecaprenyl-diphosphatase (265 aa).

The next 7 membrane-spanning stretches (helical) occupy residues 42–62 (ATTF…VLYW), 82–102 (GIML…AAHS), 108–128 (LFTP…MLLV), 143–163 (MSPA…WPGF), 181–201 (GLAA…ATGY), 221–241 (GFVV…ALVG), and 248–264 (FAWY…YFMA).

The protein belongs to the UppP family.

The protein resides in the cell inner membrane. The catalysed reaction is di-trans,octa-cis-undecaprenyl diphosphate + H2O = di-trans,octa-cis-undecaprenyl phosphate + phosphate + H(+). Functionally, catalyzes the dephosphorylation of undecaprenyl diphosphate (UPP). Confers resistance to bacitracin. This chain is Undecaprenyl-diphosphatase, found in Nitratidesulfovibrio vulgaris (strain ATCC 29579 / DSM 644 / CCUG 34227 / NCIMB 8303 / VKM B-1760 / Hildenborough) (Desulfovibrio vulgaris).